We begin with the raw amino-acid sequence, 55 residues long: Large ribosomal subunit protein bL33 (55 aa).

Belongs to the bacterial ribosomal protein bL33 family.

The sequence is that of Large ribosomal subunit protein bL33 from Aliivibrio salmonicida (strain LFI1238) (Vibrio salmonicida (strain LFI1238)).